The sequence spans 330 residues: Tryptophan--tRNA ligase (330 aa).

Residues 10-12 (QTT) and 18-19 (GN) contribute to the ATP site. The 'HIGH' region signature appears at 11–19 (TTGALHLGN). Residue Asp-134 participates in L-tryptophan binding. Residues 146 to 148 (GED), Ile-186, and 195 to 199 (KMSKS) each bind ATP. The 'KMSKS' region signature appears at 195–199 (KMSKS).

This sequence belongs to the class-I aminoacyl-tRNA synthetase family. Homodimer.

The protein localises to the cytoplasm. It catalyses the reaction tRNA(Trp) + L-tryptophan + ATP = L-tryptophyl-tRNA(Trp) + AMP + diphosphate + H(+). Its function is as follows. Catalyzes the attachment of tryptophan to tRNA(Trp). This Rickettsia typhi (strain ATCC VR-144 / Wilmington) protein is Tryptophan--tRNA ligase.